Consider the following 556-residue polypeptide: Arginine--tRNA ligase (556 aa).

Positions 134 to 144 (ANPTGPLHIGH) match the 'HIGH' region motif.

It belongs to the class-I aminoacyl-tRNA synthetase family. In terms of assembly, monomer.

It is found in the cytoplasm. It catalyses the reaction tRNA(Arg) + L-arginine + ATP = L-arginyl-tRNA(Arg) + AMP + diphosphate. This is Arginine--tRNA ligase from Micrococcus luteus (strain ATCC 4698 / DSM 20030 / JCM 1464 / CCM 169 / CCUG 5858 / IAM 1056 / NBRC 3333 / NCIMB 9278 / NCTC 2665 / VKM Ac-2230) (Micrococcus lysodeikticus).